Here is a 334-residue protein sequence, read N- to C-terminus: DNA-directed RNA polymerase subunit alpha (334 aa).

Residues 1–231 (MQSNTFLTPR…EQLSVFADLK (231 aa)) are alpha N-terminal domain (alpha-NTD). The tract at residues 245–334 (IDPVLLRPVD…GKKDTSHAAP (90 aa)) is alpha C-terminal domain (alpha-CTD).

This sequence belongs to the RNA polymerase alpha chain family. In terms of assembly, homodimer. The RNAP catalytic core consists of 2 alpha, 1 beta, 1 beta' and 1 omega subunit. When a sigma factor is associated with the core the holoenzyme is formed, which can initiate transcription.

It carries out the reaction RNA(n) + a ribonucleoside 5'-triphosphate = RNA(n+1) + diphosphate. Its function is as follows. DNA-dependent RNA polymerase catalyzes the transcription of DNA into RNA using the four ribonucleoside triphosphates as substrates. This Nitrosospira multiformis (strain ATCC 25196 / NCIMB 11849 / C 71) protein is DNA-directed RNA polymerase subunit alpha.